The sequence spans 568 residues: Urease subunit alpha (568 aa).

H134, H136, and K217 together coordinate Ni(2+). N6-carboxylysine is present on K217. H219 contacts substrate. H246 and H272 together coordinate Ni(2+). The active-site Proton donor is H320. A Ni(2+)-binding site is contributed by D360.

Belongs to the metallo-dependent hydrolases superfamily. Urease alpha subunit family. Heterotrimer of UreA (gamma), UreB (beta) and UreC (alpha) subunits. Three heterotrimers associate to form the active enzyme. The cofactor is Ni cation. Carboxylation allows a single lysine to coordinate two nickel ions.

The protein localises to the cytoplasm. It catalyses the reaction urea + 2 H2O + H(+) = hydrogencarbonate + 2 NH4(+). The protein operates within nitrogen metabolism; urea degradation; CO(2) and NH(3) from urea (urease route): step 1/1. The chain is Urease subunit alpha from Marinomonas sp. (strain MWYL1).